Consider the following 173-residue polypeptide: Translocon-associated protein subunit delta (173 aa).

A signal peptide spans 1–23; it reads MAAMASLGALALLLLSSLSRCSA. Residues 24 to 144 are Lumenal-facing; that stretch reads EACLEPQITP…SVDHRGTWNG (121 aa). Cys-26 and Cys-57 are joined by a disulfide. A Glycyl lysine isopeptide (Lys-Gly) (interchain with G-Cter in ubiquitin) cross-link involves residue Lys-73. A helical transmembrane segment spans residues 145-165; that stretch reads PWVSTEVLAAAIGLVIYYLAF. Residues 166–173 lie on the Cytoplasmic side of the membrane; sequence SAKSHIQA.

The protein belongs to the TRAP-delta family. In terms of assembly, heterotetramer of TRAP-alpha, TRAP-beta, TRAP-delta and TRAP-gamma.

Its subcellular location is the endoplasmic reticulum membrane. Its function is as follows. TRAP proteins are part of a complex whose function is to bind calcium to the ER membrane and thereby regulate the retention of ER resident proteins. This Homo sapiens (Human) protein is Translocon-associated protein subunit delta (SSR4).